The following is a 156-amino-acid chain: Endoribonuclease YbeY (156 aa).

Zn(2+)-binding residues include His122, His126, and His132.

The protein belongs to the endoribonuclease YbeY family. It depends on Zn(2+) as a cofactor.

The protein resides in the cytoplasm. Its function is as follows. Single strand-specific metallo-endoribonuclease involved in late-stage 70S ribosome quality control and in maturation of the 3' terminus of the 16S rRNA. This chain is Endoribonuclease YbeY, found in Bacillus cereus (strain ATCC 10987 / NRS 248).